Here is a 2910-residue protein sequence, read N- to C-terminus: Highly reducing polyketide synthase calA (2910 aa).

Residues 8–444 (NEPLAIVGSA…GTNAHAILES (437 aa)) form the Ketosynthase family 3 (KS3) domain. Active-site for beta-ketoacyl synthase activity residues include C181, H320, and H364. The segment at 559–875 (VFTGQGAQYA…PYYGVLSRGT (317 aa)) is acyl transferase (AT) domain. An N-terminal hotdog fold region spans residues 948–1082 (NQLLGTMMPD…LHIVFGPSSE (135 aa)). Residues 948–1245 (NQLLGTMMPD…LKPLGALTAK (298 aa)) enclose the PKS/mFAS DH domain. Residues 949–1242 (QLLGTMMPDS…GVELKPLGAL (294 aa)) form a dehydratase (DH) domain region. Residue H980 is the Proton acceptor; for dehydratase activity of the active site. Residues 1095 to 1245 (MISVDNERFY…LKPLGALTAK (151 aa)) are C-terminal hotdog fold. D1156 functions as the Proton donor; for dehydratase activity in the catalytic mechanism. The segment at 1399–1586 (EAGLWIGKII…GIDSTAPQAF (188 aa)) is methyltransferase (MT) domain. Residues 2125-2298 (TYWLCGLSGA…AATALNVGAI (174 aa)) are ketoreductase (KR)domain. One can recognise a Carrier domain in the interval 2406–2488 (QSRSEVLAVV…ELAELAAEQA (83 aa)). The residue at position 2448 (S2448) is an O-(pantetheine 4'-phosphoryl)serine. Positions 2492 to 2565 (LLPGLGGEAP…TPDPHSTKGP (74 aa)) are disordered. Over residues 2522 to 2534 (VPQSDETGSSSAD) the composition is skewed to polar residues. Residues 2550 to 2559 (GYTTPTTPDP) are compositionally biased toward low complexity. The reductase (R) domain stretch occupies residues 2597 to 2826 (LTGVSGLLGR…DFVYVKNAAD (230 aa)).

Its pathway is secondary metabolite biosynthesis. Its function is as follows. Highly reducing polyketide synthase; part of the gene cluster that mediates the biosynthesis of calbistrin A and related compounds. Calbistrin A is a secondary metabolite with an interesting structure that was recently found to have bioactivity against leukemia cells. It consists of two polyketides linked by an ester bond: a bicyclic decalin containing polyketide and a linear 12 carbon dioic acid structure. The polyketide synthase calA is probably responsible for forming the decalin moiety. Because calA lacks a designated enoylreductase (ER) domain, the required activity is provided by the trans-enoyl reductase calK. Following release from the PKS, calF then probably catalyzes the oxidation and the subsequent Diels Alder cycloisomerization that lead to the formation of the decalin moiety. The decalin polyketide backbone includes two C-methyl groups, at C7 and C11 in backbone, of which the C7 position is probably methylated by the methyltransferase domain of calA. A candidate for adding the methyl group at C11, if not done by CalA, is the cluster methyltransferase calH. Several additional tailoring enzymes within the cluster could be involved in the modification of the decalin polyketide product. Those include the 3 cytochrome P450 monooxygenases CalE, CalG and CalL, of which one might be responsible for the introduction of the extra hydroxyl group attached to the backbone of the decalin moiety, at position C9 in the backbone, that allows for attachment of the linear moiety. One tailoring enzyme activity that is expected to be involved in biosynthesis of calbistrin is an acyltransferase for connecting the two polyketide synthase products, and which could be performed by the cluster acyltransferase calJ. The enzyme responsible for the biosynthesis of the linear moiety, probably a second PKS, has not been identified yet. The chain is Highly reducing polyketide synthase calA from Penicillium decumbens.